We begin with the raw amino-acid sequence, 415 residues long: Gamma-glutamyl phosphate reductase (415 aa).

The protein belongs to the gamma-glutamyl phosphate reductase family.

The protein localises to the cytoplasm. The enzyme catalyses L-glutamate 5-semialdehyde + phosphate + NADP(+) = L-glutamyl 5-phosphate + NADPH + H(+). The protein operates within amino-acid biosynthesis; L-proline biosynthesis; L-glutamate 5-semialdehyde from L-glutamate: step 2/2. Its function is as follows. Catalyzes the NADPH-dependent reduction of L-glutamate 5-phosphate into L-glutamate 5-semialdehyde and phosphate. The product spontaneously undergoes cyclization to form 1-pyrroline-5-carboxylate. The chain is Gamma-glutamyl phosphate reductase from Desulforamulus reducens (strain ATCC BAA-1160 / DSM 100696 / MI-1) (Desulfotomaculum reducens).